A 135-amino-acid chain; its full sequence is Lymphocyte antigen 6B (135 aa).

Positions 1–26 are cleaved as a signal peptide; that stretch reads MNRSCAMKSCVLILLLALLCAERAQG. The UPAR/Ly6 domain occupies 27–119; that stretch reads LNCYNCTMIP…PTGGSTWTMA (93 aa). 5 disulfides stabilise this stretch: Cys-29–Cys-54, Cys-32–Cys-41, Cys-47–Cys-75, Cys-79–Cys-99, and Cys-100–Cys-105. A lipid anchor (GPI-anchor amidated glycine) is attached at Gly-113. Residues 114–135 constitute a propeptide, removed in mature form; that stretch reads STWTMAGVLLFILGSVLLQTLL.

The protein resides in the cell membrane. The polypeptide is Lymphocyte antigen 6B (Ly6b) (Rattus norvegicus (Rat)).